Reading from the N-terminus, the 620-residue chain is Chaperone protein HtpG (620 aa).

The a; substrate-binding stretch occupies residues 1 to 334 (MTTTDTAPQT…SEDLPLNLSR (334 aa)). The b stretch occupies residues 335–548 (EMLQNNPQLV…GQGPDRALER (214 aa)). A c region spans residues 549-620 (MLAQQNRGGA…RINRLVLRAL (72 aa)).

The protein belongs to the heat shock protein 90 family. As to quaternary structure, homodimer.

It localises to the cytoplasm. In terms of biological role, molecular chaperone. Has ATPase activity. The sequence is that of Chaperone protein HtpG from Rhodopseudomonas palustris (strain BisA53).